A 120-amino-acid polypeptide reads, in one-letter code: Large ribosomal subunit protein uL14 (120 aa).

It belongs to the universal ribosomal protein uL14 family. In terms of assembly, part of the 50S ribosomal subunit. Forms a cluster with proteins L3 and L19. In the 70S ribosome, L14 and L19 interact and together make contacts with the 16S rRNA in bridges B5 and B8.

Functionally, binds to 23S rRNA. Forms part of two intersubunit bridges in the 70S ribosome. The chain is Large ribosomal subunit protein uL14 from Aster yellows witches'-broom phytoplasma (strain AYWB).